We begin with the raw amino-acid sequence, 63 residues long: Large ribosomal subunit protein uL29 (63 aa).

The protein belongs to the universal ribosomal protein uL29 family.

The polypeptide is Large ribosomal subunit protein uL29 (Pseudomonas aeruginosa (strain UCBPP-PA14)).